The sequence spans 481 residues: Tryptophan--tRNA ligase, cytoplasmic (481 aa).

The WHEP-TRS domain occupies 12-68 (SPLELFNSIATQGELVRSLKAGNAPKDEIDSAVKMLLSLKMSYKAAMGEEYKAGCPP). Lysine 158 is modified (N6-succinyllysine). Positions 168–177 (PSSEAMHLGH) match the 'HIGH' region motif. The 'KMSKS' region motif lies at 353-357 (KMSAS). Position 355 is a phosphoserine (serine 355).

Belongs to the class-I aminoacyl-tRNA synthetase family. As to quaternary structure, homodimer. Interacts with oxidized form of GAPDH. Post-translationally, proteolytic cleavage generates 2 forms; T1-TrpRS and T2-TrpRS. Isoform 2 is widely expressed, isoform 1 is found only in embryonic stem cells.

It is found in the cytoplasm. It carries out the reaction tRNA(Trp) + L-tryptophan + ATP = L-tryptophyl-tRNA(Trp) + AMP + diphosphate + H(+). Catalyzes the attachment of tryptophan to tRNA(Trp) in a two-step reaction: tryptophan is first activated by ATP to form Trp-AMP and then transferred to the acceptor end of the tRNA(Trp). Could also possess an angiostatic activity. This is Tryptophan--tRNA ligase, cytoplasmic from Mus musculus (Mouse).